The primary structure comprises 144 residues: 3-dehydroquinate dehydratase (144 aa).

The active-site Proton acceptor is tyrosine 22. 3 residues coordinate substrate: asparagine 73, histidine 79, and aspartate 86. Histidine 99 serves as the catalytic Proton donor. Substrate is bound by residues 100 to 101 (LS) and arginine 110.

It belongs to the type-II 3-dehydroquinase family. Homododecamer.

It catalyses the reaction 3-dehydroquinate = 3-dehydroshikimate + H2O. The protein operates within metabolic intermediate biosynthesis; chorismate biosynthesis; chorismate from D-erythrose 4-phosphate and phosphoenolpyruvate: step 3/7. Functionally, catalyzes a trans-dehydration via an enolate intermediate. The chain is 3-dehydroquinate dehydratase from Herpetosiphon aurantiacus (strain ATCC 23779 / DSM 785 / 114-95).